A 972-amino-acid chain; its full sequence is Multiple C2 domain and transmembrane region protein 8 (972 aa).

Residues 1–107 (MMSNLKLGVE…PYSEAVGLPY (107 aa)) enclose the C2 1 domain. A disordered region spans residues 142 to 203 (PNLISTKKIP…MMESSLYQAP (62 aa)). A compositionally biased stretch (basic residues) spans 150 to 159 (IPSKSRHKFH). The span at 161–173 (IPTNESNHSPRGN) shows a compositional bias: polar residues. Pro residues predominate over residues 179 to 194 (PQPPPPQSQTALPPPM). C2 domains are found at residues 232 to 352 (GGGK…PEWY), 384 to 507 (ALNA…NRWF), and 543 to 669 (YSSD…SHSY). Ca(2+) contacts are provided by Asp265, Asp271, Asp318, Asp320, and Asp325. The next 2 helical transmembrane spans lie at 803–823 (IIFLVLVCSPEMILPVMSLCL) and 924–944 (TVVLYVVPFKVFVLLAGLYIM).

Belongs to the MCTP family. The cofactor is Ca(2+). In terms of tissue distribution, expressed in root hairs.

The protein resides in the membrane. It localises to the vesicle. May function as a signaling molecule by regulating the trafficking of other regulators. This Arabidopsis thaliana (Mouse-ear cress) protein is Multiple C2 domain and transmembrane region protein 8.